Reading from the N-terminus, the 244-residue chain is Orotidine 5'-phosphate decarboxylase (244 aa).

Substrate-binding positions include Asp12, Lys34, 61–70, Thr125, Arg187, Gln196, Gly216, and Arg217; that span reads DLKLFDIPNT. Lys63 (proton donor) is an active-site residue.

This sequence belongs to the OMP decarboxylase family. Type 1 subfamily. Homodimer.

It carries out the reaction orotidine 5'-phosphate + H(+) = UMP + CO2. It functions in the pathway pyrimidine metabolism; UMP biosynthesis via de novo pathway; UMP from orotate: step 2/2. Its function is as follows. Catalyzes the decarboxylation of orotidine 5'-monophosphate (OMP) to uridine 5'-monophosphate (UMP). The polypeptide is Orotidine 5'-phosphate decarboxylase (Dictyoglomus thermophilum (strain ATCC 35947 / DSM 3960 / H-6-12)).